Reading from the N-terminus, the 103-residue chain is Co-chaperonin GroES (103 aa).

The protein belongs to the GroES chaperonin family. Heptamer of 7 subunits arranged in a ring. Interacts with the chaperonin GroEL.

The protein resides in the cytoplasm. Functionally, together with the chaperonin GroEL, plays an essential role in assisting protein folding. The GroEL-GroES system forms a nano-cage that allows encapsulation of the non-native substrate proteins and provides a physical environment optimized to promote and accelerate protein folding. GroES binds to the apical surface of the GroEL ring, thereby capping the opening of the GroEL channel. The chain is Co-chaperonin GroES from Synechococcus elongatus (strain ATCC 33912 / PCC 7942 / FACHB-805) (Anacystis nidulans R2).